A 463-amino-acid chain; its full sequence is tRNA-2-methylthio-N(6)-dimethylallyladenosine synthase (463 aa).

The 121-residue stretch at 5–125 (RKLHIKSYGC…LPQLLAKAEQ (121 aa)) folds into the MTTase N-terminal domain. Cys-14, Cys-50, Cys-88, Cys-166, Cys-170, and Cys-173 together coordinate [4Fe-4S] cluster. The region spanning 152–384 (RARGISAFVT…QQLIDQQQSA (233 aa)) is the Radical SAM core domain. Residues 387-449 (KAAIGRTVEV…RYSLLGELAS (63 aa)) enclose the TRAM domain.

Belongs to the methylthiotransferase family. MiaB subfamily. In terms of assembly, monomer. [4Fe-4S] cluster is required as a cofactor.

Its subcellular location is the cytoplasm. It carries out the reaction N(6)-dimethylallyladenosine(37) in tRNA + (sulfur carrier)-SH + AH2 + 2 S-adenosyl-L-methionine = 2-methylsulfanyl-N(6)-dimethylallyladenosine(37) in tRNA + (sulfur carrier)-H + 5'-deoxyadenosine + L-methionine + A + S-adenosyl-L-homocysteine + 2 H(+). In terms of biological role, catalyzes the methylthiolation of N6-(dimethylallyl)adenosine (i(6)A), leading to the formation of 2-methylthio-N6-(dimethylallyl)adenosine (ms(2)i(6)A) at position 37 in tRNAs that read codons beginning with uridine. The polypeptide is tRNA-2-methylthio-N(6)-dimethylallyladenosine synthase (Rhodopseudomonas palustris (strain ATCC BAA-98 / CGA009)).